A 219-amino-acid chain; its full sequence is 2-hydroxy-3-keto-5-methylthiopentenyl-1-phosphate phosphatase (219 aa).

This sequence belongs to the HAD-like hydrolase superfamily. MtnX family.

It catalyses the reaction 2-hydroxy-5-methylsulfanyl-3-oxopent-1-enyl phosphate + H2O = 1,2-dihydroxy-5-(methylsulfanyl)pent-1-en-3-one + phosphate. It functions in the pathway amino-acid biosynthesis; L-methionine biosynthesis via salvage pathway; L-methionine from S-methyl-5-thio-alpha-D-ribose 1-phosphate: step 4/6. Its function is as follows. Dephosphorylates 2-hydroxy-3-keto-5-methylthiopentenyl-1-phosphate (HK-MTPenyl-1-P) yielding 1,2-dihydroxy-3-keto-5-methylthiopentene (DHK-MTPene). This is 2-hydroxy-3-keto-5-methylthiopentenyl-1-phosphate phosphatase from Bacillus cereus (strain AH187).